Reading from the N-terminus, the 436-residue chain is Trigger factor (436 aa).

The PPIase FKBP-type domain occupies glutamate 161–proline 246.

Belongs to the FKBP-type PPIase family. Tig subfamily.

It is found in the cytoplasm. It catalyses the reaction [protein]-peptidylproline (omega=180) = [protein]-peptidylproline (omega=0). Involved in protein export. Acts as a chaperone by maintaining the newly synthesized protein in an open conformation. Functions as a peptidyl-prolyl cis-trans isomerase. The polypeptide is Trigger factor (Pseudomonas fluorescens (strain Pf0-1)).